We begin with the raw amino-acid sequence, 127 residues long: MMRQSLQAVLPEISGNKTSSLRKSVCSDLLTLFNSPHSALPSLLVSGMPEWQLHNQSDKHLQSWYCRQLRSALLFHEPRIAALQVNLKEAYCHTLAISLEIMLYHDDEPLTFDLVWQKGSWHRTMPQ.

It belongs to the GpW/Gp25 family. IraD subfamily. As to quaternary structure, interacts with RssB.

The protein localises to the cytoplasm. Functionally, inhibits RpoS proteolysis by regulating RssB activity, thereby increasing the stability of the sigma stress factor RpoS during oxidative stress. Its effect on RpoS stability is due to its interaction with RssB, which probably blocks the interaction of RssB with RpoS, and the consequent delivery of the RssB-RpoS complex to the ClpXP protein degradation pathway. This is Anti-adapter protein IraD from Escherichia coli (strain SMS-3-5 / SECEC).